Here is a 71-residue protein sequence, read N- to C-terminus: Large ribosomal subunit protein uL30 (71 aa).

The protein belongs to the universal ribosomal protein uL30 family. Part of the 50S ribosomal subunit.

The polypeptide is Large ribosomal subunit protein uL30 (Mycolicibacterium paratuberculosis (strain ATCC BAA-968 / K-10) (Mycobacterium paratuberculosis)).